Here is a 297-residue protein sequence, read N- to C-terminus: UDP-N-acetylenolpyruvoylglucosamine reductase (297 aa).

An FAD-binding PCMH-type domain is found at 27-192 (IGGPADALLE…LRAAYRLHPG (166 aa)). Residue arginine 170 is part of the active site. Catalysis depends on serine 220, which acts as the Proton donor. Residue glutamate 290 is part of the active site.

Belongs to the MurB family. FAD serves as cofactor.

The protein resides in the cytoplasm. It catalyses the reaction UDP-N-acetyl-alpha-D-muramate + NADP(+) = UDP-N-acetyl-3-O-(1-carboxyvinyl)-alpha-D-glucosamine + NADPH + H(+). Its pathway is cell wall biogenesis; peptidoglycan biosynthesis. Cell wall formation. The polypeptide is UDP-N-acetylenolpyruvoylglucosamine reductase (Rubrobacter xylanophilus (strain DSM 9941 / JCM 11954 / NBRC 16129 / PRD-1)).